We begin with the raw amino-acid sequence, 698 residues long: Probable Xaa-Pro aminopeptidase P (698 aa).

4 residues coordinate Mn(2+): aspartate 509, aspartate 520, glutamate 604, and glutamate 618.

This sequence belongs to the peptidase M24B family. It depends on Mn(2+) as a cofactor.

The enzyme catalyses Release of any N-terminal amino acid, including proline, that is linked to proline, even from a dipeptide or tripeptide.. Catalyzes the removal of a penultimate prolyl residue from the N-termini of peptides. The sequence is that of Probable Xaa-Pro aminopeptidase P (AMPP) from Arthroderma benhamiae (strain ATCC MYA-4681 / CBS 112371) (Trichophyton mentagrophytes).